We begin with the raw amino-acid sequence, 294 residues long: Protein RarD (294 aa).

At 1-11 (MDAKQTRQGVL) the chain is on the cytoplasmic side. A helical transmembrane segment spans residues 12 to 34 (LALAAYFIWGIAPAYFKLIYYVP). One can recognise an EamA domain in the interval 18 to 145 (FIWGIAPAYF…AVCGVLVQLW (128 aa)). Topologically, residues 35 to 37 (ADE) are periplasmic. The helical transmembrane segment at 38–60 (ILTHRVIWSFFFMVALLSVSRQW) threads the bilayer. Topologically, residues 61-72 (RQVKRLLKTPKK) are cytoplasmic. The helical transmembrane segment at 73–95 (IFLLALSAVLVGGNWLLFIWAVN) threads the bilayer. Residues 96–99 (NHHM) are Periplasmic-facing. Residues 100–122 (LEASLGYFINPLVNILLGMIFLG) traverse the membrane as a helical segment. Over 123 to 128 (ERFRRM) the chain is Cytoplasmic. The helical transmembrane segment at 129–146 (QWLAVILAVCGVLVQLWT) threads the bilayer. Residues 147-149 (FGS) are Periplasmic-facing. A helical membrane pass occupies residues 150-167 (LPIIALGLAFSFAFYGLV). The Cytoplasmic segment spans residues 168–179 (RKKIAVEAQTGM). A helical transmembrane segment spans residues 180–197 (LVETLWLLPVAAIYLFSI). The Periplasmic portion of the chain corresponds to 198–211 (ADSATSHMGQNALS). A helical membrane pass occupies residues 212 to 234 (LNLLLMAAGVVTTIPLLCFTGAA). Residues 235–238 (TRLR) lie on the Cytoplasmic side of the membrane. Residues 239–261 (LSTLGFFQYIGPTLMFLLAVTFY) traverse the membrane as a helical segment. Topologically, residues 262 to 270 (GEVPGADKM) are periplasmic. The chain crosses the membrane as a helical span at residues 271–290 (VTFAFIWVALAIFVMDAIYT). Over 291–294 (QRKK) the chain is Cytoplasmic.

Belongs to the EamA transporter family.

The protein localises to the cell inner membrane. This is Protein RarD (rarD) from Salmonella typhi.